The following is a 478-amino-acid chain: Sugar transporter ERD6-like 15 (478 aa).

The next 12 helical transmembrane spans lie at 31–51 (FVLAFIVGSCGAFAFGCIIGY), 67–87 (IADYSLFGSILTVGLILGALI), 106–126 (ILFVIGWFAIAFAKGVWLLDL), 129–149 (LLQGISIGISVYLGPVYITEI), 161–181 (FAQLFAGVGISVFYALGTIVA), 185–205 (LAILGCIPSLMVLPLLFFIPE), 267–287 (AFSLTIGVVLIALPQLGGLNG), 305–325 (FGFISTSVVQMFGGILGTVLV), 333–353 (LLLVSQAGMFLGCLTTAISFF), 366–386 (VLALFSVMVYFGSYGSGMGSI), 406–426 (MCNLVSSISAWLVAYSFSYLL), and 432–452 (GTFLMFATVAGLGFVFIAKLV).

Belongs to the major facilitator superfamily. Sugar transporter (TC 2.A.1.1) family.

Its subcellular location is the membrane. In terms of biological role, sugar transporter. The polypeptide is Sugar transporter ERD6-like 15 (Arabidopsis thaliana (Mouse-ear cress)).